Here is a 149-residue protein sequence, read N- to C-terminus: Down syndrome critical region protein 9 (149 aa).

Residues 1–41 form a disordered region; sequence MGRICPVNSRARRLRARPGRPSGDSLPYHQLQGGAPRLWSP.

As to expression, testis specific.

The protein is Down syndrome critical region protein 9 (DSCR9) of Homo sapiens (Human).